Consider the following 308-residue polypeptide: F420-non-reducing hydrogenase subunit G (308 aa).

Belongs to the [NiFe]/[NiFeSe] hydrogenase small subunit family. The F420-non-reducing hydrogenase is composed of three subunits; MvhA, MvhD and MvhG. It forms a complex with the heterodisulfide reductase (hdr).

Its function is as follows. Part of a complex that provides reducing equivalents for heterodisulfide reductase. The protein is F420-non-reducing hydrogenase subunit G (mvhG) of Methanothermobacter thermautotrophicus (strain ATCC 29096 / DSM 1053 / JCM 10044 / NBRC 100330 / Delta H) (Methanobacterium thermoautotrophicum).